An 89-amino-acid polypeptide reads, in one-letter code: uncharacterized protein (89 aa).

This is an uncharacterized protein from Schizosaccharomyces pombe (strain 972 / ATCC 24843) (Fission yeast).